We begin with the raw amino-acid sequence, 203 residues long: Dual-action ribosomal maturation protein DarP (203 aa).

Residues 1–13 (MQPMTRNSRNSPG) show a composition bias toward polar residues. The interval 1 to 39 (MQPMTRNSRNSPGSRFPGAFAPEPDMDEPKSKSQKKRDM) is disordered. Over residues 27–39 (DEPKSKSQKKRDM) the composition is skewed to basic and acidic residues.

It belongs to the DarP family.

It localises to the cytoplasm. Functionally, member of a network of 50S ribosomal subunit biogenesis factors which assembles along the 30S-50S interface, preventing incorrect 23S rRNA structures from forming. Promotes peptidyl transferase center (PTC) maturation. The chain is Dual-action ribosomal maturation protein DarP from Cupriavidus pinatubonensis (strain JMP 134 / LMG 1197) (Cupriavidus necator (strain JMP 134)).